We begin with the raw amino-acid sequence, 247 residues long: 2,3-bisphosphoglycerate-dependent phosphoglycerate mutase (247 aa).

Substrate contacts are provided by residues 8 to 15 (RHGESTWN), 21 to 22 (TG), Arg-60, 87 to 90 (ERHY), Lys-98, 114 to 115 (RR), and 183 to 184 (GN). His-9 functions as the Tele-phosphohistidine intermediate in the catalytic mechanism. Catalysis depends on Glu-87, which acts as the Proton donor/acceptor.

This sequence belongs to the phosphoglycerate mutase family. BPG-dependent PGAM subfamily. Homodimer.

The catalysed reaction is (2R)-2-phosphoglycerate = (2R)-3-phosphoglycerate. It participates in carbohydrate degradation; glycolysis; pyruvate from D-glyceraldehyde 3-phosphate: step 3/5. Its function is as follows. Catalyzes the interconversion of 2-phosphoglycerate and 3-phosphoglycerate. The sequence is that of 2,3-bisphosphoglycerate-dependent phosphoglycerate mutase from Albidiferax ferrireducens (strain ATCC BAA-621 / DSM 15236 / T118) (Rhodoferax ferrireducens).